Consider the following 581-residue polypeptide: Arginine--tRNA ligase (581 aa).

The short motif at 126 to 136 is the 'HIGH' region element; sequence PNLAKEMHVGH.

Belongs to the class-I aminoacyl-tRNA synthetase family. In terms of assembly, monomer.

It is found in the cytoplasm. The enzyme catalyses tRNA(Arg) + L-arginine + ATP = L-arginyl-tRNA(Arg) + AMP + diphosphate. This is Arginine--tRNA ligase from Shewanella sp. (strain MR-4).